We begin with the raw amino-acid sequence, 156 residues long: Insulin (156 aa).

An N-terminal signal peptide occupies residues 1–31; sequence MSKFLLQSHSANACLLTLLLTLASNLDISLA. Cystine bridges form between cysteine 37–cysteine 114, cysteine 49–cysteine 119, cysteine 61–cysteine 128, and cysteine 112–cysteine 115. A propeptide spans 79–93 (c peptide beta); sequence DTENVNDKLRGILLN. Positions 96-102 are cleaved as a propeptide — c peptide alpha; the sequence is EAFSYLT. A propeptide spans 141–156 (d peptide); the sequence is TGRSNSGHAQLEDNFS. The propeptide at 144-156 is d peptide short form; the sequence is SNSGHAQLEDNFS. 4-carboxyglutamate is present on glutamate 152.

The protein belongs to the insulin family. In terms of assembly, heterodimer of a B chain or a B chain' and an A chain probably linked by three disulfide bonds. In terms of tissue distribution, expressed in the central region of the cerebral ganglia mostly within the F and C clusters.

It localises to the secreted. In terms of biological role, involved in glucose metabolism. This chain is Insulin (PIN), found in Aplysia californica (California sea hare).